Here is a 589-residue protein sequence, read N- to C-terminus: MGSIFKDGRRILVRPKSLIICLCLISIIFTQLIRYQYQLIADEVQPTINEDHSSSQSLKNTKLNSTRSSSPISPPKSLNKLTSQEFWEHIFNIFEINKFDDGLKPLIKYTPKEQQLTTKIKTRDWLLSKANIFHKDIIRQYHESVLRNLPSKLPKSVYTPNTYGIVTIGGNFYSWMAYIQLLQLRKLGSNLPVEILIPSIEDYYKEAHFCDHVLPQYNAKCILVPEKLGFNVAKHWKFSSYQFKALALCLSSFQHVLILDSDNVVLSKPEKVFDSPVYRDNGMVLWPDYWERTISPEWYDIIGKPVVGNKQVRTGRFPVNIHNMLTSELEINETRFHDLEGALPDLSTESGQVMFNKKTHGKVMLMTLYYNIFGPEIYYKLFSLGALGEGDKDTFAAAALACGEKYYQVASSIRTLGYFDTTPGGGFHGMAMAQKNPQLDYQLFQKTNQNFKDLHLDWDNEAKDQFSANNKIPIFTMHCNIKKINPAAYMKDEKIANMDEKRMNVRFYSNLKFKLNDDDIYSPDNEKEKNKSEKTDNDPNEIDFELSRWQIVSEILCDQKITFQFLKDENMDEVCQFVKNTIAWLGKKT.

The Cytoplasmic portion of the chain corresponds to methionine 1–lysine 16. Residues serine 17 to isoleucine 33 traverse the membrane as a helical segment. The Extracellular segment spans residues arginine 34–threonine 589. A disordered region spans residues glutamate 50–serine 77. Residues serine 54–proline 71 show a composition bias toward polar residues. Asparagine 64, asparagine 332, and asparagine 530 each carry an N-linked (GlcNAc...) asparagine glycan.

Belongs to the MNN1/MNT family.

Its subcellular location is the golgi apparatus membrane. The protein operates within protein modification; protein glycosylation. In terms of biological role, alpha-1,2-mannosyltransferase required for cell wall integrity. Responsible for addition of the first alpha-1,2-linked mannose to form the branches on the mannan backbone of oligosaccharides. Addition of alpha-1,2-mannose is required for stabilization of the alpha-1,6-mannose backbone and hence regulates mannan fibril length; and is important for both immune recognition and virulence. The chain is Alpha-1,2-mannosyltransferase MNN22 (MNN22) from Candida albicans (strain SC5314 / ATCC MYA-2876) (Yeast).